The sequence spans 279 residues: tRNA dimethylallyltransferase (279 aa).

ATP is bound at residue Gly-10–Ser-17. A substrate-binding site is contributed by Thr-12 to Ser-17.

This sequence belongs to the IPP transferase family. In terms of assembly, monomer. It depends on Mg(2+) as a cofactor.

It catalyses the reaction adenosine(37) in tRNA + dimethylallyl diphosphate = N(6)-dimethylallyladenosine(37) in tRNA + diphosphate. In terms of biological role, catalyzes the transfer of a dimethylallyl group onto the adenine at position 37 in tRNAs that read codons beginning with uridine, leading to the formation of N6-(dimethylallyl)adenosine (i(6)A). In Roseobacter denitrificans (strain ATCC 33942 / OCh 114) (Erythrobacter sp. (strain OCh 114)), this protein is tRNA dimethylallyltransferase.